The chain runs to 617 residues: RNA polymerase sigma factor RpoD (617 aa).

The segment at 170 to 220 (PDDGSLPAEEVEPVNLKDDSADSKEKDDEEEESDDSSDSDDEGDGGPDPEE) is disordered. A compositionally biased stretch (basic and acidic residues) spans 184–195 (NLKDDSADSKEK). Over residues 196-218 (DDEEEESDDSSDSDDEGDGGPDP) the composition is skewed to acidic residues. The interval 383–453 (MVEANLRLVI…TRSIADQART (71 aa)) is sigma-70 factor domain-2. The Interaction with polymerase core subunit RpoC motif lies at 407 to 410 (DLIQ). Residues 462–538 (ETINKLNRIS…DSTMQSPIEM (77 aa)) are sigma-70 factor domain-3. A sigma-70 factor domain-4 region spans residues 551-604 (VLAGLTAREAKVLRMRFGIDMNTDHTLEEVGKQFDVTRERIRQIEAKALRKLRH). Residues 577–596 (LEEVGKQFDVTRERIRQIEA) constitute a DNA-binding region (H-T-H motif).

It belongs to the sigma-70 factor family. RpoD/SigA subfamily. In terms of assembly, interacts transiently with the RNA polymerase catalytic core.

The protein resides in the cytoplasm. Functionally, sigma factors are initiation factors that promote the attachment of RNA polymerase to specific initiation sites and are then released. This sigma factor is the primary sigma factor during exponential growth. This chain is RNA polymerase sigma factor RpoD, found in Pseudomonas aeruginosa (strain ATCC 15692 / DSM 22644 / CIP 104116 / JCM 14847 / LMG 12228 / 1C / PRS 101 / PAO1).